The sequence spans 256 residues: 5-keto-4-deoxy-D-glucarate aldolase (256 aa).

The Proton acceptor role is filled by H50. Q151 is a substrate binding site. A Mg(2+)-binding site is contributed by E153. Substrate-binding residues include S178 and D179. D179 contributes to the Mg(2+) binding site.

The protein belongs to the HpcH/HpaI aldolase family. KDGluc aldolase subfamily. Homohexamer; trimer of dimers. Mg(2+) serves as cofactor.

The catalysed reaction is 5-dehydro-4-deoxy-D-glucarate = 2-hydroxy-3-oxopropanoate + pyruvate. It catalyses the reaction 2-dehydro-3-deoxy-D-glucarate = 2-hydroxy-3-oxopropanoate + pyruvate. The protein operates within carbohydrate acid metabolism; galactarate degradation; D-glycerate from galactarate: step 2/3. Catalyzes the reversible retro-aldol cleavage of both 5-keto-4-deoxy-D-glucarate and 2-keto-3-deoxy-D-glucarate to pyruvate and tartronic semialdehyde. The protein is 5-keto-4-deoxy-D-glucarate aldolase of Escherichia coli O157:H7 (strain EC4115 / EHEC).